The following is a 31-amino-acid chain: YCQKWMWTCDEERKCCEGLVCRLWCKRIINM.

Intrachain disulfides connect Cys2/Cys16, Cys9/Cys21, and Cys15/Cys25. At Met31 the chain carries Methionine amide.

Belongs to the neurotoxin 30 (phrixotoxin) family. In terms of tissue distribution, expressed by the venom gland.

The protein localises to the secreted. Its function is as follows. Potent and specific blocker of Kv4.2/KCND2 (IC(50)=34 nM) and Kv4.3/KCND3 (IC(50)=71 nM) potassium channels. Acts by altering the gating properties of these channels. This is Kappa-theraphotoxin-Ps1b from Paraphysa scrofa (Chilean copper tarantula).